The chain runs to 517 residues: MSASTQGRRIVVVGAGVGGLAAAARLAHQGFDVQVFEKTQGPGGRCNRLQVDGFTWDLGPTIVLMPEVFEETFRAVGRRIEDYLTLLRCDPNYRVHFRDRSDVTFTSELCAMGRELERVEPGSYARYLAFLAQGRVQYRTSLDHLVGRNYAGLRDYLSPRVLARIFQVRAHRRMYADVSRFFQDERLRAAMTFQTMYLGVSPYASPAVYGLLPFTELGVGIWFPKGGLYAIPQALERLAREEGVRFHYGAPVERILTDGGRTRGVRLEGGEVVEADAVLCNADLPYAYEKLLDPKATTLKRKEKLRYTSSGYMLYLGMKRRYPELLHHNVVFGRDYKGSFDDIFEFRVPEDPSFYVNAPTRTDASLAPEGKDALYVLVPVPHQHPDLDWKVEGPKVRAKFFARMAELGFPSLESDIEVERRSSTPDDWAGTFNLARGSGFGLSQNFTQIGPFRPSNQDARVKNLFFVGASTQPGTGLPTVLISARLVTERLMTWAHAQGVSLSPRTAAATPLEGVAA.

An FAD-binding site is contributed by 11–44; sequence VVVGAGVGGLAAAARLAHQGFDVQVFEKTQGPGG.

It belongs to the carotenoid/retinoid oxidoreductase family. FAD is required as a cofactor.

It catalyses the reaction 15-cis-phytoene + 2 A = all-trans-zeta-carotene + 2 AH2. The protein operates within carotenoid biosynthesis; lycopene biosynthesis. Its function is as follows. Dehydrogenates carotenes in the cis conformation: has cis-to-trans isomerase activity and mediates dehydrogenation of cis-phytoene, producing zeta-carotene via the intermediary of phytofluene by the symmetrical introduction of 2 double bonds at the C-11 and C-11' positions of phytoene. In Myxococcus xanthus, this protein is zeta-carotene-forming phytoene desaturase (carA2).